A 1638-amino-acid polypeptide reads, in one-letter code: DNA polymerase III PolC-type (1638 aa).

The segment at 193-212 (SEIKKQRSEERESKNTREAK) is disordered. Basic and acidic residues predominate over residues 194 to 212 (EIKKQRSEERESKNTREAK). One can recognise an Exonuclease domain in the interval 596-752 (YVVFDVETTG…FDAEATGRLL (157 aa)).

This sequence belongs to the DNA polymerase type-C family. PolC subfamily.

It localises to the cytoplasm. The enzyme catalyses DNA(n) + a 2'-deoxyribonucleoside 5'-triphosphate = DNA(n+1) + diphosphate. Required for replicative DNA synthesis. This DNA polymerase also exhibits 3' to 5' exonuclease activity. This Lactococcus lactis subsp. lactis (strain IL1403) (Streptococcus lactis) protein is DNA polymerase III PolC-type.